The sequence spans 352 residues: Mitochondrial ubiquitin ligase activator of NFKB 1 (352 aa).

The Cytoplasmic portion of the chain corresponds to 1-8; the sequence is MENGGRPS. The chain crosses the membrane as a helical span at residues 9 to 29; that stretch reads LCQFILLGTTSVVTAALYSVY. The Mitochondrial intermembrane segment spans residues 30–238; it reads RQKAWVSQEL…LLQRQESSVR (209 aa). K52 participates in a covalent cross-link: Glycyl lysine isopeptide (Lys-Gly) (interchain with G-Cter in ubiquitin). A helical transmembrane segment spans residues 239–259; that stretch reads LWKVLALVFGFATCATLFFIL. At 260-352 the chain is on the cytoplasmic side; it reads RKQYLQRQER…ITRVIPLYNS (93 aa). Glycyl lysine isopeptide (Lys-Gly) (interchain with G-Cter in ubiquitin) cross-links involve residues K273 and K299. The segment at 302–340 adopts an RING-type zinc-finger fold; the sequence is CVVCLSSFKSCVFLECGHVCSCTECYRALPEPKKCPICR.

In terms of assembly, homooligomer. Interacts with MAP3K7/TAK1. Interacts with UBC9. Interacts with and sumoylates DNM1L. Interacts with MAVS. Interacts with TP53 (via N-terminus); the interaction leads to ubiquitination and proteasomal degradation of TP53. In terms of processing, ubiquitinated by PRKN during mitophagy, leading to its degradation and enhancement of mitophagy. Deubiquitinated by USP30.

It localises to the mitochondrion outer membrane. The protein resides in the peroxisome. The enzyme catalyses S-ubiquitinyl-[E2 ubiquitin-conjugating enzyme]-L-cysteine + [acceptor protein]-L-lysine = [E2 ubiquitin-conjugating enzyme]-L-cysteine + N(6)-ubiquitinyl-[acceptor protein]-L-lysine.. Its pathway is protein modification; protein ubiquitination. It participates in protein modification; protein sumoylation. Functionally, exhibits weak E3 ubiquitin-protein ligase activity. E3 ubiquitin ligases accept ubiquitin from an E2 ubiquitin-conjugating enzyme in the form of a thioester and then directly transfer the ubiquitin to targeted substrates. Can ubiquitinate AKT1 preferentially at 'Lys-284' involving 'Lys-48'-linked polyubiquitination and seems to be involved in regulation of Akt signaling by targeting phosphorylated Akt to proteasomal degradation. Mediates polyubiquitination of cytoplasmic TP53 at 'Lys-24' which targets TP53 for proteasomal degradation, thus reducing TP53 levels in the cytoplasm and mitochondrion. Proposed to preferentially act as a SUMO E3 ligase at physiological concentrations. Plays a role in the control of mitochondrial morphology by promoting mitochondrial fragmentation, and influences mitochondrial localization. Likely to promote mitochondrial fission through negatively regulating the mitochondrial fusion proteins MFN1 and MFN2, acting in a pathway that is parallel to the PRKN/PINK1 regulatory pathway. May also be involved in the sumoylation of the membrane fission protein DNM1L. Inhibits cell growth. When overexpressed, activates JNK through MAP3K7/TAK1 and induces caspase-dependent apoptosis. Involved in the modulation of innate immune defense against viruses by inhibiting RIGI-dependent antiviral response. Can mediate RIGI sumoylation and disrupt its polyubiquitination. This chain is Mitochondrial ubiquitin ligase activator of NFKB 1 (MUL1), found in Macaca fascicularis (Crab-eating macaque).